Here is a 1081-residue protein sequence, read N- to C-terminus: DNA primase (1081 aa).

Positions 484-497 are enriched in polar residues; sequence SPNKPQSVHSTPPL. Positions 484-508 are disordered; that stretch reads SPNKPQSVHSTPPLDQSRGDELSPG. The CHC2-type zinc finger occupies 1024 to 1064; sequence CLRAKHLRSARGLARTFLSISADVHGRLCASISQQCFATKC.

It belongs to the herpesviridae DNA primase family. In terms of assembly, associates with the helicase and the primase-associated factor to form the helicase-primase factor.

It localises to the host nucleus. Essential component of the helicase/primase complex. Unwinds the DNA at the replication forks and generates single-stranded DNA for both leading and lagging strand synthesis. The primase initiates primer synthesis and thereby produces large amount of short RNA primers on the lagging strand that the polymerase elongates using dNTPs. The protein is DNA primase of Equus caballus (Horse).